We begin with the raw amino-acid sequence, 855 residues long: Protein translocase subunit SecA (855 aa).

Residues Gln-85, 103–107, and Asp-492 contribute to the ATP site; that span reads GEGKT. The tract at residues 794–845 is disordered; it reads AAIHEESSSAAAPGPGQNQPGGPGGPSAGPVAPVRNLDKHGRNELCPCGSGK. Residues 801–811 are compositionally biased toward low complexity; sequence SSAAAPGPGQN. Residues Cys-839, Cys-841, Cys-850, and Cys-851 each coordinate Zn(2+).

This sequence belongs to the SecA family. In terms of assembly, monomer and homodimer. Part of the essential Sec protein translocation apparatus which comprises SecA, SecYEG and auxiliary proteins SecDF. Other proteins may also be involved. Zn(2+) is required as a cofactor.

The protein resides in the cell membrane. Its subcellular location is the cytoplasm. The enzyme catalyses ATP + H2O + cellular proteinSide 1 = ADP + phosphate + cellular proteinSide 2.. Its function is as follows. Part of the Sec protein translocase complex. Interacts with the SecYEG preprotein conducting channel. Has a central role in coupling the hydrolysis of ATP to the transfer of proteins into and across the cell membrane, serving as an ATP-driven molecular motor driving the stepwise translocation of polypeptide chains across the membrane. The polypeptide is Protein translocase subunit SecA (Clostridium beijerinckii (strain ATCC 51743 / NCIMB 8052) (Clostridium acetobutylicum)).